Here is a 927-residue protein sequence, read N- to C-terminus: Probable dipeptidyl-aminopeptidase B (927 aa).

Disordered regions lie at residues 1 to 44 (MAPA…TTSI) and 58 to 101 (GHFE…KNDG). The Cytoplasmic portion of the chain corresponds to 1–108 (MAPAPGMAPY…NDGMNRGMRR (108 aa)). 2 stretches are compositionally biased toward basic and acidic residues: residues 19–36 (HRPE…HESE) and 58–70 (GHFE…PMKE). A helical; Signal-anchor for type II membrane protein transmembrane segment spans residues 109 to 129 (TLIIVAGLLISAWVVGLFFYV). The Vacuolar portion of the chain corresponds to 130–927 (SHKSYKPASQ…RSIQPILPIL (798 aa)). 2 N-linked (GlcNAc...) asparagine glycosylation sites follow: Asn365 and Asn530. Ser769 functions as the Charge relay system in the catalytic mechanism. An N-linked (GlcNAc...) asparagine glycan is attached at Asn828. Catalysis depends on charge relay system residues Asp846 and His879.

It belongs to the peptidase S9B family.

Its subcellular location is the vacuole membrane. It catalyses the reaction Release of an N-terminal dipeptide, Xaa-Yaa-|-Zaa-, from a polypeptide, preferentially when Yaa is Pro, provided Zaa is neither Pro nor hydroxyproline.. Its function is as follows. Type IV dipeptidyl-peptidase which removes N-terminal dipeptides sequentially from polypeptides having unsubstituted N-termini provided that the penultimate residue is proline. The polypeptide is Probable dipeptidyl-aminopeptidase B (DAPB) (Podospora anserina (strain S / ATCC MYA-4624 / DSM 980 / FGSC 10383) (Pleurage anserina)).